A 162-amino-acid chain; its full sequence is Peptide deformylase (162 aa).

Positions 91 and 133 each coordinate Fe cation. The active site involves Glu134. His137 contacts Fe cation.

Belongs to the polypeptide deformylase family. It depends on Fe(2+) as a cofactor.

The enzyme catalyses N-terminal N-formyl-L-methionyl-[peptide] + H2O = N-terminal L-methionyl-[peptide] + formate. Functionally, removes the formyl group from the N-terminal Met of newly synthesized proteins. Requires at least a dipeptide for an efficient rate of reaction. N-terminal L-methionine is a prerequisite for activity but the enzyme has broad specificity at other positions. In Finegoldia magna (strain ATCC 29328 / DSM 20472 / WAL 2508) (Peptostreptococcus magnus), this protein is Peptide deformylase.